A 670-amino-acid chain; its full sequence is Protein HBS1 (670 aa).

Disordered regions lie at residues lysine 60–glutamine 88 and lysine 164–arginine 202. Acidic residues predominate over residues glutamine 63–alanine 75. Residues proline 189–serine 200 show a composition bias toward low complexity. Residues lysine 245–glutamate 468 form the tr-type G domain. The tract at residues glycine 254 to serine 261 is G1. Residue glycine 254–serine 261 participates in GTP binding. The interval glycine 310–aspartate 314 is G2. The tract at residues aspartate 331–glycine 334 is G3. Residues asparagine 393 to aspartate 396 and serine 432 to leucine 434 contribute to the GTP site. The G4 stretch occupies residues asparagine 393–aspartate 396. Residues serine 432–leucine 434 form a G5 region.

It belongs to the TRAFAC class translation factor GTPase superfamily. Classic translation factor GTPase family. In terms of assembly, component of the Pelota-HBS1L complex, also named Dom34-Hbs1 complex, composed of pelo and HBS1. Expressed in ovaries (at protein level).

It is found in the cytoplasm. The catalysed reaction is GTP + H2O = GDP + phosphate + H(+). Its function is as follows. GTPase component of the Pelota-HBS1L complex, a complex that recognizes stalled ribosomes and triggers the No-Go Decay (NGD) pathway. The Pelota-HBS1L complex recognizes ribosomes stalled at the 3' end of an mRNA and engages stalled ribosomes by destabilizing mRNA in the mRNA channel. Following ribosome-binding, the Pelota-HBS1L complex promotes recruitment of pix, which drives the disassembly of stalled ribosomes, followed by degradation of damaged mRNAs as part of the NGD pathway. Together with pelo, required for transposon silencing in the ovary and testis. Together with pelo, promotes meiosis and spermatid individualization during spermatogenesis. The sequence is that of Protein HBS1 from Drosophila melanogaster (Fruit fly).